The chain runs to 670 residues: Transcriptional regulatory protein DOT6 (670 aa).

The span at 1–44 shows a compositional bias: polar residues; sequence MSISTSLNSASIHLSSMDTHPQLHSLTRQPHSSSTAMSKNEAQE. The segment at 1–78 is disordered; it reads MSISTSLNSA…SKNPSSWDPQ (78 aa). Over residues 45–74 the composition is skewed to low complexity; the sequence is SSPSLPASSSSSTSASASASSKNSSKNPSS. The region spanning 67–121 is the HTH myb-type domain; the sequence is NSSKNPSSWDPQDDLLLRHLKEVKKMGWKDISQYFPNRTPNACQFRWRRLKSGNL. Residues 94 to 117 constitute a DNA-binding region (H-T-H motif); that stretch reads WKDISQYFPNRTPNACQFRWRRLK. Residues 226–242 show a composition bias toward basic residues; that stretch reads HHPHQHLHHHPHHKTLK. Disordered regions lie at residues 226-250, 293-332, 406-436, and 483-659; these read HHPH…SHSF, TTPS…NTSR, HSSS…CNPT, and ADML…NSPL. Phosphoserine is present on residues Ser-245 and Ser-247. Low complexity-rich tracts occupy residues 295-307 and 316-332; these read PSSP…LLSS and NWSR…NTSR. The segment covering 425-436 has biased composition (polar residues); the sequence is SGHSMKSSCNPT. The residue at position 487 (Ser-487) is a Phosphoserine. Phosphothreonine is present on Thr-489. A Phosphoserine modification is found at Ser-491. Over residues 512 to 522 the composition is skewed to basic and acidic residues; it reads DDDKGSDKEDV. Low complexity-rich tracts occupy residues 544 to 561 and 587 to 598; these read SSNK…SSKD and TITSDTSSSAAT. Polar residues predominate over residues 599 to 608; the sequence is MNRTPNSKNP. Over residues 622–659 the composition is skewed to low complexity; sequence ITPRPKPSSTTTSITTETTNNMINHSSSTTTTTNNSPL.

Belongs to the DOT6 family. Component of the RPD3C(L) complex composed of at least ASH1, CTI6, DEP1, DOT6, PHO23, RPD3, RXT2, RXT3, SAP30, SDS3, SIN3, TOD6; UME1 and UME6.

It localises to the nucleus. Its function is as follows. Component of the RPD3 histone deacetylase complex RPD3C(L) responsible for the deacetylation of lysine residues on the N-terminal part of the core histones (H2A, H2B, H3 and H4). Histone deacetylation gives a tag for epigenetic repression and plays an important role in transcriptional regulation, cell cycle progression and developmental events. DOT6 binds to sequences containing the core CGATG, which resembles the PAC (Polymerase A and C) motif. The sequence is that of Transcriptional regulatory protein DOT6 (DOT6) from Saccharomyces cerevisiae (strain ATCC 204508 / S288c) (Baker's yeast).